A 1110-amino-acid polypeptide reads, in one-letter code: cGMP-specific 3',5'-cyclic phosphodiesterase (1110 aa).

Low complexity-rich tracts occupy residues 1 to 25 (MTDV…SSAS) and 35 to 55 (TSTA…ASGA). Disordered stretches follow at residues 1–55 (MTDV…ASGA), 67–128 (ISNQ…QQDV), and 184–203 (ASPT…SASS). Over residues 88-103 (APYPPVPAAKPKPTPT) the composition is skewed to pro residues. The segment covering 192–203 (SPRSLSNSSASS) has biased composition (low complexity). 2 GAF domains span residues 233-385 (DIDV…GIGI) and 417-601 (NLEC…GLGI). The PDEase domain occupies 631–954 (SQDQTEKLTQ…RNWQDLAEKV (324 aa)). Residue H707 is the Proton donor of the active site. The a divalent metal cation site is built by H711, H747, D748, and D858. 2 disordered regions span residues 997–1028 (AQHG…TGAL) and 1040–1110 (LYNS…CSLL). 2 stretches are compositionally biased toward basic and acidic residues: residues 1006-1015 (DDSHTPEHQR) and 1056-1068 (LESH…DDKS). Over residues 1082–1097 (GRMSASSSTSSAGTVV) the composition is skewed to low complexity. A compositionally biased stretch (basic residues) spans 1100-1110 (SKKRSKLCSLL). C1107 carries the cysteine methyl ester modification. The S-farnesyl cysteine moiety is linked to residue C1107. Residues 1108–1110 (SLL) constitute a propeptide, removed in mature form.

This sequence belongs to the cyclic nucleotide phosphodiesterase family. Interacts with PrBP. A divalent metal cation serves as cofactor.

It is found in the cell membrane. The enzyme catalyses 3',5'-cyclic GMP + H2O = GMP + H(+). In terms of biological role, has a role regulating cGMP transport in Malpighian tubule principal cells. In Drosophila pseudoobscura pseudoobscura (Fruit fly), this protein is cGMP-specific 3',5'-cyclic phosphodiesterase.